The sequence spans 142 residues: Large-conductance mechanosensitive channel (142 aa).

A run of 3 helical transmembrane segments spans residues 10–30 (FAVKGNVIDLAVGVIIGGAFG), 40–60 (LIMPVVGLVFGKLDFSNLFIV), and 86–106 (GNFITVAVNFVILAFIIFVMV).

It belongs to the MscL family. Homopentamer.

The protein localises to the cell inner membrane. Channel that opens in response to stretch forces in the membrane lipid bilayer. May participate in the regulation of osmotic pressure changes within the cell. The polypeptide is Large-conductance mechanosensitive channel (Acidovorax ebreus (strain TPSY) (Diaphorobacter sp. (strain TPSY))).